The following is a 370-amino-acid chain: tRNA-specific 2-thiouridylase MnmA (370 aa).

ATP contacts are provided by residues 11–18 (GMSGGVDS) and M37. The interval 97 to 99 (NPD) is interaction with target base in tRNA. C102 serves as the catalytic Nucleophile. C102 and C199 form a disulfide bridge. G126 is an ATP binding site. An interaction with tRNA region spans residues 149–151 (KDQ). C199 acts as the Cysteine persulfide intermediate in catalysis. The interval 307 to 308 (RY) is interaction with tRNA.

Belongs to the MnmA/TRMU family.

Its subcellular location is the cytoplasm. The enzyme catalyses S-sulfanyl-L-cysteinyl-[protein] + uridine(34) in tRNA + AH2 + ATP = 2-thiouridine(34) in tRNA + L-cysteinyl-[protein] + A + AMP + diphosphate + H(+). Its function is as follows. Catalyzes the 2-thiolation of uridine at the wobble position (U34) of tRNA, leading to the formation of s(2)U34. This chain is tRNA-specific 2-thiouridylase MnmA, found in Staphylococcus saprophyticus subsp. saprophyticus (strain ATCC 15305 / DSM 20229 / NCIMB 8711 / NCTC 7292 / S-41).